The chain runs to 317 residues: Malate dehydrogenase (317 aa).

Residues 15-20 (GSGNIG) and aspartate 39 each bind NAD(+). Substrate is bound by residues arginine 88 and arginine 94. NAD(+)-binding positions include asparagine 101 and 124–126 (VTN). The substrate site is built by asparagine 126 and arginine 157. Histidine 181 acts as the Proton acceptor in catalysis.

The protein belongs to the LDH/MDH superfamily. MDH type 3 family.

The catalysed reaction is (S)-malate + NAD(+) = oxaloacetate + NADH + H(+). Functionally, catalyzes the reversible oxidation of malate to oxaloacetate. The protein is Malate dehydrogenase of Ehrlichia ruminantium (strain Gardel).